We begin with the raw amino-acid sequence, 158 residues long: Protein Smg homolog (158 aa).

Belongs to the Smg family.

The polypeptide is Protein Smg homolog (Thioalkalivibrio sulfidiphilus (strain HL-EbGR7)).